The chain runs to 243 residues: Probable transcriptional regulatory protein Ldb0677 (243 aa).

A disordered region spans residues 1-22; sequence MSGHSKWHNIQGRKNAQDAKRG.

This sequence belongs to the TACO1 family.

It is found in the cytoplasm. This is Probable transcriptional regulatory protein Ldb0677 from Lactobacillus delbrueckii subsp. bulgaricus (strain ATCC 11842 / DSM 20081 / BCRC 10696 / JCM 1002 / NBRC 13953 / NCIMB 11778 / NCTC 12712 / WDCM 00102 / Lb 14).